The primary structure comprises 124 residues: Fluoride-specific ion channel FluC (124 aa).

Helical transmembrane passes span 3–23 (YLLVFLGGGLGAMFRHFINTV), 36–56 (TFFINVSGSLVMGLIAGYFAF), 66–86 (LFLMTGILGGYTTFSAFSLDA), and 100–120 (LYVLGSVALAIAGLFAGLALI). Na(+) contacts are provided by Gly-74 and Thr-77.

The protein belongs to the fluoride channel Fluc/FEX (TC 1.A.43) family.

Its subcellular location is the cell inner membrane. The catalysed reaction is fluoride(in) = fluoride(out). With respect to regulation, na(+) is not transported, but it plays an essential structural role and its presence is essential for fluoride channel function. Fluoride-specific ion channel. Important for reducing fluoride concentration in the cell, thus reducing its toxicity. This chain is Fluoride-specific ion channel FluC, found in Rhodopseudomonas palustris (strain BisB5).